The following is a 556-amino-acid chain: Potassium-transporting ATPase potassium-binding subunit (556 aa).

Helical transmembrane passes span 6 to 26 (AGLIFLAVLVAALVAVHVPLG), 65 to 85 (GVLAFSSVSIIFLFVLQLVQG), 133 to 153 (GLAVQNFVSAAVGMAVAVALV), 176 to 196 (LRILLPISIVGAVLLVAGGAI), 249 to 269 (PTAWTNWLEVFLILVIGFSLP), 283 to 303 (YAIASVMASLYLLSTGFMLWF), 378 to 398 (GLYGMLVLAVITVFVAGLMVG), 419 to 439 (YFLVTPLIVLTGTAIAMALPG), 483 to 503 (ALGLAMAFGRFLPIVLVLALA), and 526 to 546 (FVGMVAGVTLIVVALTFLPML).

It belongs to the KdpA family. In terms of assembly, the system is composed of three essential subunits: KdpA, KdpB and KdpC.

Its subcellular location is the cell membrane. Its function is as follows. Part of the high-affinity ATP-driven potassium transport (or Kdp) system, which catalyzes the hydrolysis of ATP coupled with the electrogenic transport of potassium into the cytoplasm. This subunit binds the extracellular potassium ions and delivers the ions to the membrane domain of KdpB through an intramembrane tunnel. The polypeptide is Potassium-transporting ATPase potassium-binding subunit (Mycolicibacterium paratuberculosis (strain ATCC BAA-968 / K-10) (Mycobacterium paratuberculosis)).